The primary structure comprises 232 residues: 5'-methylthioadenosine/S-adenosylhomocysteine nucleosidase (232 aa).

Glu14 serves as the catalytic Proton acceptor. Residues Gly80, Val154, and 175-176 (ME) each bind substrate. Asp199 functions as the Proton donor in the catalytic mechanism.

This sequence belongs to the PNP/UDP phosphorylase family. MtnN subfamily.

The enzyme catalyses S-adenosyl-L-homocysteine + H2O = S-(5-deoxy-D-ribos-5-yl)-L-homocysteine + adenine. It catalyses the reaction S-methyl-5'-thioadenosine + H2O = 5-(methylsulfanyl)-D-ribose + adenine. The catalysed reaction is 5'-deoxyadenosine + H2O = 5-deoxy-D-ribose + adenine. Its pathway is amino-acid biosynthesis; L-methionine biosynthesis via salvage pathway; S-methyl-5-thio-alpha-D-ribose 1-phosphate from S-methyl-5'-thioadenosine (hydrolase route): step 1/2. Its function is as follows. Catalyzes the irreversible cleavage of the glycosidic bond in both 5'-methylthioadenosine (MTA) and S-adenosylhomocysteine (SAH/AdoHcy) to adenine and the corresponding thioribose, 5'-methylthioribose and S-ribosylhomocysteine, respectively. Also cleaves 5'-deoxyadenosine, a toxic by-product of radical S-adenosylmethionine (SAM) enzymes, into 5-deoxyribose and adenine. This chain is 5'-methylthioadenosine/S-adenosylhomocysteine nucleosidase, found in Actinobacillus pleuropneumoniae serotype 3 (strain JL03).